Here is a 425-residue protein sequence, read N- to C-terminus: Type II secretion system protein L (425 aa).

The Cytoplasmic segment spans residues 1-273 (MKIAGKWKRK…DKAWQNTLLP (273 aa)). The chain crosses the membrane as a helical span at residues 274–290 (WRGVGIAFACYLLLVVA). The Periplasmic portion of the chain corresponds to 291–425 (DAGWAHYQLY…EGRLTLRSQQ (135 aa)).

The protein belongs to the GSP L family. As to quaternary structure, type II secretion system is composed of four main components: the outer membrane complex, the inner membrane complex, the cytoplasmic secretion ATPase and the periplasm-spanning pseudopilus. Forms homodimers. Interacts with OutM/GspM. Interacts with OutE/GspE and OutF/GspF.

It is found in the cell inner membrane. Functionally, inner membrane component of the type II secretion system required for the energy-dependent secretion of extracellular factors such as proteases and toxins from the periplasm. Plays a role in the complex assembly and recruits OutM resulting in a stable complex in the inner membrane. Provides thus a link between the energy-providing OutE protein in the cytoplasm and the rest of the T2SS machinery. In Pectobacterium carotovorum subsp. carotovorum (Erwinia carotovora subsp. carotovora), this protein is Type II secretion system protein L (outL).